Reading from the N-terminus, the 854-residue chain is MSGLFFLLSELLILLGKINSVSKKSLCHPELFKIDNKLNWRTSEEMVLTCKAVVNEKCKKSKLQMRWYKDNELLGKKIERGLKMKYRYRKKLKLNDSGNYTCFVFNKNGNSSVFFLINVTEKENFHVNENKILDGSEISNNTLYLHPEMGMENYHVIPNDEIVMQCRFFSPISINLTVSWYQHSCDSNYHNAQLLVKDSKFNISSNKESCQSYLSHIPLDSICLYSWLRFIATSDDQSCITCLIESDNNSIEKTKFTFTVLVDAGHRPHLTFAPSSTVCQGSNFTMKCETNVPRPILYIYKLDPSFNIENPIIHLSNSTLFVNNYNEDSKRSSQSAEVLIKSMDFNYSGRYLCSLAELPLFEIMHLSVIKCSNNFFMNSVPLSIFLVIGFFVAIILLSLIIYCFFLQYKNAVDSRKHFSIRKTVIVEYESPIYKSFINGTKNFKTDVLHTNSLLPDSNPLLPPIIKIKPIKRLSQFRDGNYGEQLPSTSTDRTRLESTRHSQLENEVFECGSGNNSLSLKYGLRKSSSFEFFSLYEFPCDAKWEFPREKLKITNKKLGEGAFGMVYEGIANDIGNRSNPIKVAVKMMRDDFSDSNVHDFVKEMEIMKHIGRHPNVIQLLGLCTQKGPLRVIVELAPYGNLRDFVRAKNKKYSKSKKIIGNFTSSILCTYSLQIARGMTYLASRSVVHRDLSARNILVGEHFEMKIADFGLTRIVDYYYRKKTDGILPVKWMAPEALLEKKYTTKSDVWSYGILLWEIFTLGDSPYSAILPEKVVDLIRKGFQNPKPELANFEIYRLMQHCWSLSSENRPNFFEIVEILIDIIQRIDDEPEENIYHSELNYLKMESDYLEPKCLV.

The signal sequence occupies residues 1–20 (MSGLFFLLSELLILLGKINS). Residues 21–383 (VSKKSLCHPE…NFFMNSVPLS (363 aa)) are Extracellular-facing. The Ig-like C2-type 1 domain occupies 29-120 (PELFKIDNKL…SSVFFLINVT (92 aa)). C50 and C102 form a disulfide bridge. Residues N95, N99, N110, N118, N140, N175, N202, N248, N283, N317, and N346 are each glycosylated (N-linked (GlcNAc...) asparagine). Ig-like C2-type domains follow at residues 147–259 (PEMG…FTFT) and 268–369 (PHLT…LSVI). Residues C166 and C242 are joined by a disulfide bond. A disulfide bridge links C288 with C353. The helical transmembrane segment at 384 to 404 (IFLVIGFFVAIILLSLIIYCF) threads the bilayer. Over 405 to 854 (FLQYKNAVDS…SDYLEPKCLV (450 aa)) the chain is Cytoplasmic. Residues 551-822 (KITNKKLGEG…EIVEILIDII (272 aa)) enclose the Protein kinase domain. Residues 557–565 (LGEGAFGMV) and K585 each bind ATP. Catalysis depends on D689, which acts as the Proton acceptor. Y718 bears the Phosphotyrosine; by autocatalysis mark.

Belongs to the protein kinase superfamily. Tyr protein kinase family. Fibroblast growth factor receptor subfamily. Expressed in brain, stem cells and the mesenchymal cells.

Its subcellular location is the membrane. It catalyses the reaction L-tyrosyl-[protein] + ATP = O-phospho-L-tyrosyl-[protein] + ADP + H(+). Receptor for basic fibroblast growth factor. This chain is Fibroblast growth factor receptor 1 (FGFR1), found in Dugesia japonica (Planarian).